The sequence spans 242 residues: Glycerol-3-phosphate acyltransferase (242 aa).

The next 6 membrane-spanning stretches (helical) occupy residues 7–27 (ISLL…IMFA), 61–81 (IAIG…ILLI), 102–122 (YYLT…PVYF), 135–155 (GFVF…WWTI), 162–182 (VSLA…IPWL), and 201–221 (DWYI…IIIW).

It belongs to the PlsY family. Probably interacts with PlsX.

It localises to the cell membrane. The catalysed reaction is an acyl phosphate + sn-glycerol 3-phosphate = a 1-acyl-sn-glycero-3-phosphate + phosphate. The protein operates within lipid metabolism; phospholipid metabolism. Functionally, catalyzes the transfer of an acyl group from acyl-phosphate (acyl-PO(4)) to glycerol-3-phosphate (G3P) to form lysophosphatidic acid (LPA). This enzyme utilizes acyl-phosphate as fatty acyl donor, but not acyl-CoA or acyl-ACP. The sequence is that of Glycerol-3-phosphate acyltransferase from Mycoplasmoides gallisepticum (strain R(low / passage 15 / clone 2)) (Mycoplasma gallisepticum).